Reading from the N-terminus, the 444-residue chain is Trigger factor (444 aa).

Residues 170 to 255 (NDIAVIDFVG…LKAIKQLEIT (86 aa)) enclose the PPIase FKBP-type domain.

Belongs to the FKBP-type PPIase family. Tig subfamily.

The protein resides in the cytoplasm. It catalyses the reaction [protein]-peptidylproline (omega=180) = [protein]-peptidylproline (omega=0). Functionally, involved in protein export. Acts as a chaperone by maintaining the newly synthesized protein in an open conformation. Functions as a peptidyl-prolyl cis-trans isomerase. In Mycoplasma pneumoniae (strain ATCC 29342 / M129 / Subtype 1) (Mycoplasmoides pneumoniae), this protein is Trigger factor (tig).